The sequence spans 331 residues: UDP-N-acetylenolpyruvoylglucosamine reductase (331 aa).

The region spanning 54–221 (RVGGAAELYV…TQATFQLQPG (168 aa)) is the FAD-binding PCMH-type domain. Residue arginine 200 is part of the active site. Serine 251 functions as the Proton donor in the catalytic mechanism. Glutamate 321 is an active-site residue.

Belongs to the MurB family. Requires FAD as cofactor.

The protein resides in the cytoplasm. It catalyses the reaction UDP-N-acetyl-alpha-D-muramate + NADP(+) = UDP-N-acetyl-3-O-(1-carboxyvinyl)-alpha-D-glucosamine + NADPH + H(+). The protein operates within cell wall biogenesis; peptidoglycan biosynthesis. Its function is as follows. Cell wall formation. The chain is UDP-N-acetylenolpyruvoylglucosamine reductase from Trichormus variabilis (strain ATCC 29413 / PCC 7937) (Anabaena variabilis).